The primary structure comprises 205 residues: Small ribosomal subunit protein uS4 (205 aa).

The region spanning 94–157 (SRLDTVVYRM…KQIPLIQESV (64 aa)) is the S4 RNA-binding domain.

The protein belongs to the universal ribosomal protein uS4 family. Part of the 30S ribosomal subunit. Contacts protein S5. The interaction surface between S4 and S5 is involved in control of translational fidelity.

One of the primary rRNA binding proteins, it binds directly to 16S rRNA where it nucleates assembly of the body of the 30S subunit. Functionally, with S5 and S12 plays an important role in translational accuracy. This chain is Small ribosomal subunit protein uS4, found in Rickettsia felis (strain ATCC VR-1525 / URRWXCal2) (Rickettsia azadi).